A 263-amino-acid polypeptide reads, in one-letter code: Aminoglycoside 3'-phosphotransferase (263 aa).

Residue aspartate 183 is the Proton acceptor of the active site.

It belongs to the aminoglycoside phosphotransferase family.

The catalysed reaction is kanamycin A + ATP = kanamycin 3'-phosphate + ADP + H(+). Resistance to kanamycin and structurally-related aminoglycosides, including amikacin. The protein is Aminoglycoside 3'-phosphotransferase (rph) of Streptomyces ribosidificus.